The following is a 257-amino-acid chain: Zinc transporter ZupT (257 aa).

8 helical membrane passes run 5 to 25, 32 to 52, 61 to 81, 109 to 129, 137 to 157, 171 to 191, 195 to 215, and 236 to 256; these read LILTILAGAATFIGAFLGVLG, LLAFSLGFAAGIMLLISLMEM, GMSPVLGYGMFIFGLLGYFGL, AILLTLGISLHNFPEGIATFV, LGFGIALAVALHNIPEGLAVA, ILWAGISGLAEILGGVLAWLI, MISPVVMAAIMAAVAGIMVAL, and GVLCGMSVMGFSLVLLQTAGI. Fe(2+) is bound by residues N120 and E123. Zn(2+) is bound by residues E123 and H148. Fe(2+) contacts are provided by N149, E152, and E181. E152 contacts Zn(2+).

This sequence belongs to the ZIP transporter (TC 2.A.5) family. ZupT subfamily.

It localises to the cell inner membrane. The catalysed reaction is Zn(2+)(in) = Zn(2+)(out). Its function is as follows. Mediates zinc uptake. May also transport other divalent cations. This is Zinc transporter ZupT from Shigella flexneri serotype 5b (strain 8401).